The following is a 263-amino-acid chain: MKQLMMIGFGAMASEVYAHLPQDLELKWIVVPERSVESVKQKVDRHIQVISDINQCDGAPDYVIEVAGQAAVKEHAKNVLAHGWNIGLISVGTLADSEFFTELQQTAEQNGAHLHLLAGAIAGIDGIAAAKEGGLEKVTYKGCKSPNSWRGSYAEQLIDLDQVHTVTMFYRGTAREAAQKFPANANVAATIALAGVGMDNTIVELTVDPDTTQNKHTIVAEGRFGQMTIEMVGVPLASNPKTSTLAALSVIRACRNSVEAIQI.

NAD(+) is bound by residues alanine 120 and asparagine 186. The active site involves histidine 216.

The protein belongs to the L-aspartate dehydrogenase family.

It catalyses the reaction L-aspartate + NADP(+) + H2O = oxaloacetate + NH4(+) + NADPH + H(+). The enzyme catalyses L-aspartate + NAD(+) + H2O = oxaloacetate + NH4(+) + NADH + H(+). Its pathway is cofactor biosynthesis; NAD(+) biosynthesis; iminoaspartate from L-aspartate (dehydrogenase route): step 1/1. Its function is as follows. Specifically catalyzes the NAD or NADP-dependent dehydrogenation of L-aspartate to iminoaspartate. The chain is L-aspartate dehydrogenase from Acinetobacter baylyi (strain ATCC 33305 / BD413 / ADP1).